Reading from the N-terminus, the 526-residue chain is Cyclin-L1 (526 aa).

Residues 1–36 form a disordered region; that stretch reads MASGPHSTATAAAAASSAAPSAGGSSSGTTTTTTTT. 2 cyclin-like regions span residues 88-190 and 203-287; these read ELIQ…RVLK and KIIV…ETLR. Residues 318–526 are disordered; the sequence is KGLNPDGTPA…SRSGHGRHRR (209 aa). Phosphothreonine is present on T325. Phosphoserine is present on residues S335 and S338. Residues K339 and K347 each participate in a glycyl lysine isopeptide (Lys-Gly) (interchain with G-Cter in SUMO2) cross-link. Over residues 342-352 the composition is skewed to basic and acidic residues; it reads SPREVKAEEKS. 2 positions are modified to phosphoserine: S352 and S355. Positions 361–370 are enriched in basic and acidic residues; sequence VKKEPEDRQQ. K362 participates in a covalent cross-link: Glycyl lysine isopeptide (Lys-Gly) (interchain with G-Cter in SUMO2). Residue S374 is modified to Phosphoserine. Basic residues-rich tracts occupy residues 382–418, 438–452, 460–476, and 486–498; these read DSKRSRNSRSASRSRSRTRSRSRSHTPRRHYNNRRSR, RRHHNHGSPHLKAKH, SNRHGHKRKKSRSRSQS, and KKHRHERGHHRDR. An RS region spans residues 390–432; it reads RSASRSRSRTRSRSRSHTPRRHYNNRRSRSGTYSSRSRSRSRS. The residue at position 445 (S445) is a Phosphoserine. The span at 499–508 shows a compositional bias: basic and acidic residues; the sequence is RERSRSFERS. Positions 509-526 are enriched in basic residues; it reads HKSKHHGGSRSGHGRHRR.

Belongs to the cyclin family. Cyclin L subfamily. In terms of assembly, (Microbial infection) Interacts with human herpes virus 1 (HHV-1) transcriptional regulator ICP22. As to quaternary structure, interacts with POLR2A via its hyperphosphorylated C-terminal domain (CTD). Interacts with CDK11A, CDK12 and CDK13. Isoforms 1 and 2, but not isoform 3, interact with CDK11B. May form a ternary complex with CDK11B and casein kinase II (CKII). Interacts with pre-mRNA-splicing factors, including at least SRSF1, SRSF2 and SRSF7/SLU7. As to expression, widely expressed. Overexpression in primary tumors of head and neck squamous cell carcinomas (HNSCC).

Its subcellular location is the nucleus speckle. It is found in the nucleus. The protein localises to the nucleoplasm. Involved in pre-mRNA splicing. Functions in association with cyclin-dependent kinases (CDKs). Inhibited by the CDK-specific inhibitor CDKN1A/p21. May play a role in the regulation of RNA polymerase II (pol II). May be a candidate proto-oncogene in head and neck squamous cell carcinomas (HNSCC). The protein is Cyclin-L1 (CCNL1) of Homo sapiens (Human).